Here is a 179-residue protein sequence, read N- to C-terminus: RNA polymerase sigma-E factor (179 aa).

A Polymerase core binding motif is present at residues 36-49 (DLLQTALVRTYGRW). The H-T-H motif DNA-binding region spans 130 to 149 (TEETAAALGMSAGTVKSTLH).

It belongs to the sigma-70 factor family. ECF subfamily.

The protein localises to the cytoplasm. Functionally, sigma factors are initiation factors that promote the attachment of RNA polymerase to specific initiation sites and are then released. This sigma factor is required for normal cell wall integrity; it is recruited by RNA polymerase to transcribe genes with cell wall-related functions. The chain is RNA polymerase sigma-E factor (sigE) from Streptomyces avermitilis (strain ATCC 31267 / DSM 46492 / JCM 5070 / NBRC 14893 / NCIMB 12804 / NRRL 8165 / MA-4680).